The chain runs to 205 residues: Heme-binding protein 2 (205 aa).

Positions 1-39 (MAEPLQPDPGAAEDAAAQAVETPGWKAPEDAGPQPGSYE) are disordered. Alanine 2 carries the N-acetylalanine modification. Serine 181 carries the post-translational modification Phosphoserine.

The protein belongs to the HEBP family. In terms of assembly, monomer. Interacts with LRPPRC. May interact with BCL2L1; an interaction with BCL2L1 was observed using a peptide, but not with the full-length protein. The full-length protein would have to undergo a major conformation change for the interaction to occur. Interacts with PDCD6. Detected in placenta.

It localises to the cytoplasm. The protein localises to the mitochondrion. Functionally, can promote mitochondrial permeability transition and facilitate necrotic cell death under different types of stress conditions. The polypeptide is Heme-binding protein 2 (HEBP2) (Homo sapiens (Human)).